We begin with the raw amino-acid sequence, 351 residues long: Phosphoribosylformylglycinamidine cyclo-ligase (351 aa).

Belongs to the AIR synthase family.

It localises to the cytoplasm. The enzyme catalyses 2-formamido-N(1)-(5-O-phospho-beta-D-ribosyl)acetamidine + ATP = 5-amino-1-(5-phospho-beta-D-ribosyl)imidazole + ADP + phosphate + H(+). It participates in purine metabolism; IMP biosynthesis via de novo pathway; 5-amino-1-(5-phospho-D-ribosyl)imidazole from N(2)-formyl-N(1)-(5-phospho-D-ribosyl)glycinamide: step 2/2. This Burkholderia multivorans (strain ATCC 17616 / 249) protein is Phosphoribosylformylglycinamidine cyclo-ligase.